The sequence spans 242 residues: Uridylate kinase (242 aa).

Residue Lys-11 to Gly-14 participates in ATP binding. The interval Gly-19–Gly-24 is involved in allosteric activation by GTP. Residue Gly-53 participates in UMP binding. 2 residues coordinate ATP: Gly-54 and Arg-58. Residues Asp-73 and Ile-134–Thr-141 contribute to the UMP site. The ATP site is built by Asn-162, Tyr-168, and Asp-171.

It belongs to the UMP kinase family. Homohexamer.

The protein resides in the cytoplasm. The catalysed reaction is UMP + ATP = UDP + ADP. Its pathway is pyrimidine metabolism; CTP biosynthesis via de novo pathway; UDP from UMP (UMPK route): step 1/1. Its activity is regulated as follows. Allosterically activated by GTP. Inhibited by UTP. Its function is as follows. Catalyzes the reversible phosphorylation of UMP to UDP. This is Uridylate kinase from Streptococcus agalactiae serotype III (strain NEM316).